The primary structure comprises 414 residues: Serine/threonine transporter SstT (414 aa).

The next 8 membrane-spanning stretches (helical) occupy residues 16–36, 46–66, 84–104, 143–163, 180–200, 219–239, 300–320, and 332–352; these read GSLV…AWIS, LGTL…LMLV, ILFL…VFSF, ALLN…GFAL, AVTF…FGLV, LVVL…LLVF, MAGA…TLGV, and VVAS…LLLI.

The protein belongs to the dicarboxylate/amino acid:cation symporter (DAACS) (TC 2.A.23) family.

Its subcellular location is the cell inner membrane. The enzyme catalyses L-serine(in) + Na(+)(in) = L-serine(out) + Na(+)(out). The catalysed reaction is L-threonine(in) + Na(+)(in) = L-threonine(out) + Na(+)(out). Involved in the import of serine and threonine into the cell, with the concomitant import of sodium (symport system). This Salmonella dublin (strain CT_02021853) protein is Serine/threonine transporter SstT.